The following is a 372-amino-acid chain: uncharacterized protein (372 aa).

Composition is skewed to basic residues over residues 1–11 and 38–48; these read MNKILGLRRAK and RLRRGMQRLSR. The interval 1–127 is disordered; that stretch reads MNKILGLRRA…NSGTRDTPCW (127 aa). Over residues 50–61 the composition is skewed to basic and acidic residues; it reads GYGDNRRSRGSE. A compositionally biased stretch (polar residues) spans 93–104; that stretch reads GKTSPCGSSGTP.

This is an uncharacterized protein from Psittacid herpesvirus 1 (isolate Amazon parrot/-/97-0001/1997) (PsHV-1).